Consider the following 230-residue polypeptide: Thymidylate kinase (230 aa).

20-27 (GGEGAGKS) lines the ATP pocket.

This sequence belongs to the thymidylate kinase family.

It catalyses the reaction dTMP + ATP = dTDP + ADP. Functionally, phosphorylation of dTMP to form dTDP in both de novo and salvage pathways of dTTP synthesis. This is Thymidylate kinase from Rhodopseudomonas palustris (strain TIE-1).